The chain runs to 401 residues: Elongation factor Tu (401 aa).

Residues 10–211 form the tr-type G domain; sequence KPHLNVGTIG…ALDTFVPNPK (202 aa). The segment at 19–26 is G1; the sequence is GHVDHGKT. 19 to 26 is a binding site for GTP; the sequence is GHVDHGKT. Thr-26 provides a ligand contact to Mg(2+). The G2 stretch occupies residues 62-66; the sequence is GITIA. The G3 stretch occupies residues 83-86; it reads DCPG. Residues 83 to 87 and 138 to 141 each bind GTP; these read DCPGH and NKAD. A G4 region spans residues 138–141; sequence NKAD. The interval 179–181 is G5; the sequence is SAV.

This sequence belongs to the TRAFAC class translation factor GTPase superfamily. Classic translation factor GTPase family. EF-Tu/EF-1A subfamily. Monomer.

Its subcellular location is the cytoplasm. It carries out the reaction GTP + H2O = GDP + phosphate + H(+). Its function is as follows. GTP hydrolase that promotes the GTP-dependent binding of aminoacyl-tRNA to the A-site of ribosomes during protein biosynthesis. In Leptospira borgpetersenii serovar Hardjo-bovis (strain JB197), this protein is Elongation factor Tu.